Here is a 388-residue protein sequence, read N- to C-terminus: Succinate--CoA ligase [ADP-forming] subunit beta (388 aa).

The 237-residue stretch at 9-245 (KELLAKYGLP…KSQENERELK (237 aa)) folds into the ATP-grasp domain. Residues lysine 46, 53 to 55 (GRG), glutamate 100, tyrosine 103, and glutamate 108 each bind ATP. Positions 200 and 214 each coordinate Mg(2+). Substrate contacts are provided by residues asparagine 265 and 322-324 (GIV).

The protein belongs to the succinate/malate CoA ligase beta subunit family. Heterotetramer of two alpha and two beta subunits. Mg(2+) serves as cofactor.

It carries out the reaction succinate + ATP + CoA = succinyl-CoA + ADP + phosphate. The enzyme catalyses GTP + succinate + CoA = succinyl-CoA + GDP + phosphate. It participates in carbohydrate metabolism; tricarboxylic acid cycle; succinate from succinyl-CoA (ligase route): step 1/1. In terms of biological role, succinyl-CoA synthetase functions in the citric acid cycle (TCA), coupling the hydrolysis of succinyl-CoA to the synthesis of either ATP or GTP and thus represents the only step of substrate-level phosphorylation in the TCA. The beta subunit provides nucleotide specificity of the enzyme and binds the substrate succinate, while the binding sites for coenzyme A and phosphate are found in the alpha subunit. This Laribacter hongkongensis (strain HLHK9) protein is Succinate--CoA ligase [ADP-forming] subunit beta.